Consider the following 525-residue polypeptide: MSLIKNKNCFIPKKIFSEKDDFIFIPCDGVIQEKFEKIALSFESPKLNEINFHKKVKIIYFLDDYQHEIKKEMLPSSIISIIFYNIKNILSSDSIPDTVKFLGFNGYKHQITNEIVKGSVTSLGVGGDMGYPLDKHLLNGSSIKTLCFDGNYSHQITNDSIIDHLDYLCLMKTKFPLNEKSLKNPLNIYPPTIPKNISFYETYKFPIPGTIFPKIESTIITFNINITDIRQPITSKLFQDLPINYNVYIGWGYRHKLDECTIDSKIRFLGIGDVVHPVPETFLGIRVKFYSGYSHQIKPFPNNASLRELALGNVKYPITKDTIPSPWGVGELSIDKGYDFKLTPDLFENVRALKLIDIKSTVFTKHSLPKSNCVLAKVSLISLQIPFDLSFFPTDIINTMLIHNVSQVIGTNQLPKSLTSLSLIKVKLDPKLTIPKSVSHLKIEEIDRPLTKESIPNNLEVFELLNYKFPISKELFPDTVHYIVIGETINPFTIEMIPTSLKHLVSAHDYKFLPFDKPLLKYYYQ.

Residues 65–107 (YQHEIKKEMLPSSIISIIFYNIKNILSSDSIPDTVKFLGFNGY) form an FNIP repeat.

This Dictyostelium discoideum (Social amoeba) protein is FNIP repeat-containing protein DDB_G0274617.